Consider the following 579-residue polypeptide: Thiol:disulfide interchange protein DsbD (579 aa).

The first 16 residues, 1-16 (MKKLFLFFTLIFTAFA), serve as a signal peptide directing secretion. Disulfide bonds link C124–C129 and C193–C315. 8 consecutive transmembrane segments (helical) span residues 178-198 (IFGF…LPML), 230-250 (LTYT…QIAL), 254-274 (YVMI…FGLF), 296-316 (GAFG…SPCT), 337-357 (AATL…ITLF), 376-396 (FGFV…PEVW), 397-417 (EPRL…LQMS), and 420-440 (GFGY…VQPL). A Thioredoxin domain is found at 449–579 (TTTQSAVENM…AFSNWLKALH (131 aa)). C495 and C498 form a disulfide bridge.

It belongs to the thioredoxin family. DsbD subfamily.

The protein resides in the cell inner membrane. It carries out the reaction [protein]-dithiol + NAD(+) = [protein]-disulfide + NADH + H(+). The enzyme catalyses [protein]-dithiol + NADP(+) = [protein]-disulfide + NADPH + H(+). In terms of biological role, required to facilitate the formation of correct disulfide bonds in some periplasmic proteins and for the assembly of the periplasmic c-type cytochromes. Acts by transferring electrons from cytoplasmic thioredoxin to the periplasm. This transfer involves a cascade of disulfide bond formation and reduction steps. This chain is Thiol:disulfide interchange protein DsbD, found in Haemophilus influenzae (strain 86-028NP).